A 238-amino-acid chain; its full sequence is Glyceraldehyde 3-phosphate phosphatase (238 aa).

Belongs to the HAD-like hydrolase superfamily. Requires Mg(2+) as cofactor.

Its function is as follows. Catalyzes the dephosphorylation of D,L-glyceraldehyde 3-phosphate in vitro. In Pyrococcus abyssi (strain GE5 / Orsay), this protein is Glyceraldehyde 3-phosphate phosphatase.